The sequence spans 197 residues: RNA pyrophosphohydrolase (197 aa).

The 149-residue stretch at 6–154 (GYRPNVGIVL…KREVYQLALS (149 aa)) folds into the Nudix hydrolase domain. Positions 38 to 59 (GGIQHGESPEQAMYRELHEEVG) match the Nudix box motif.

It belongs to the Nudix hydrolase family. RppH subfamily. A divalent metal cation is required as a cofactor.

Its function is as follows. Accelerates the degradation of transcripts by removing pyrophosphate from the 5'-end of triphosphorylated RNA, leading to a more labile monophosphorylated state that can stimulate subsequent ribonuclease cleavage. This Polynucleobacter necessarius subsp. necessarius (strain STIR1) protein is RNA pyrophosphohydrolase.